Here is a 265-residue protein sequence, read N- to C-terminus: NADH dehydrogenase [ubiquinone] iron-sulfur protein 3, mitochondrial (265 aa).

A mitochondrion-targeting transit peptide spans 1-33 (MAALIRNLGARAAVAALSAKHVVPAAGSTALRM).

Belongs to the complex I 30 kDa subunit family. As to quaternary structure, part of the mitochondrial membrane respiratory chain NADH dehydrogenase (Complex I). Interacts with sicily; interaction is stronger with unprocessed sicily protein.

It localises to the mitochondrion. The enzyme catalyses a ubiquinone + NADH + 5 H(+)(in) = a ubiquinol + NAD(+) + 4 H(+)(out). Functionally, core subunit of the mitochondrial membrane respiratory chain NADH dehydrogenase (Complex I) that is believed to belong to the minimal assembly required for catalysis. Complex I functions in the transfer of electrons from NADH to the respiratory chain. The immediate electron acceptor for the enzyme is believed to be ubiquinone. The chain is NADH dehydrogenase [ubiquinone] iron-sulfur protein 3, mitochondrial from Drosophila melanogaster (Fruit fly).